Here is a 309-residue protein sequence, read N- to C-terminus: MAFSFQVSKMNSFDNYNAAIHPKHDLISVNAPVFGKDAKLSPHLAIVLADKGFMLEQVCLPWRYFTDRGFVVEFVIAESIFPPRPPKPNDSYMTGWKSHVLGASKEILDIYSVLCTLNEFNNPKCYRSNGFTFDNFSAVFITGGRNPFVREMLEDPLLHASLVPYIHSCRTIQPDEEVKDNRKIKVLGAISQGAAAIYLAEPNINMKTTTIPAWMERSNSFLNPTPDNSTYPYAATIIPKDKYVSGPYRRVAFTYQDENYYYISGRSNKDIGELSKKMYLMYKQAYKDLNASLRERRRRSTSNRRNSGI.

This sequence to S.pombe SpAC14C4.04.

This is an uncharacterized protein from Schizosaccharomyces pombe (strain 972 / ATCC 24843) (Fission yeast).